The sequence spans 354 residues: MNGTEGPYFYIPMVNTTGIVRSPYEYPQYYLVNPAAYAALGAYMFFLILLGFPINFLTLYVTLEHKKLRTPLNYILLNLAVADLFMVFGGFTTTMYTSMHGYFVLGRLGCNLEGFFATLGGEIGLWSLVVLAIERWVVVCKPISNFRFGENHAIMGLAFTWIMACACAVPPLVGWSRYIPEGMQCSCGVDYYTRAEGFNNESFVVYMFTCHFCIPLTIIGFCYGRLLCAVKEAAAAQQESETTQRAEREVTRMVILMVVGFLVCWLPYASVAWYIFSNQGSQFGPLFMTIPAFFAKSSSVYNPMIYICMNKQFRHCMITTLCCGKNPFEEEEGASTTASKTEASSVSSSSVSPA.

At 1–36 (MNGTEGPYFYIPMVNTTGIVRSPYEYPQYYLVNPAA) the chain is on the extracellular side. 2 N-linked (GlcNAc...) asparagine glycosylation sites follow: Asn2 and Asn15. A helical membrane pass occupies residues 37–61 (YAALGAYMFFLILLGFPINFLTLYV). The Cytoplasmic segment spans residues 62–73 (TLEHKKLRTPLN). A helical membrane pass occupies residues 74–96 (YILLNLAVADLFMVFGGFTTTMY). Topologically, residues 97–110 (TSMHGYFVLGRLGC) are extracellular. Cys110 and Cys187 are oxidised to a cystine. Residues 111 to 133 (NLEGFFATLGGEIGLWSLVVLAI) traverse the membrane as a helical segment. The 'Ionic lock' involved in activated form stabilization motif lies at 134-136 (ERW). Topologically, residues 134 to 152 (ERWVVVCKPISNFRFGENH) are cytoplasmic. Residues 153–173 (AIMGLAFTWIMACACAVPPLV) form a helical membrane-spanning segment. The Extracellular segment spans residues 174–202 (GWSRYIPEGMQCSCGVDYYTRAEGFNNES). A glycan (N-linked (GlcNAc...) asparagine) is linked at Asn200. Residues 203 to 224 (FVVYMFTCHFCIPLTIIGFCYG) form a helical membrane-spanning segment. The Cytoplasmic segment spans residues 225–252 (RLLCAVKEAAAAQQESETTQRAEREVTR). The helical transmembrane segment at 253–274 (MVILMVVGFLVCWLPYASVAWY) threads the bilayer. The Extracellular segment spans residues 275 to 286 (IFSNQGSQFGPL). The chain crosses the membrane as a helical span at residues 287–308 (FMTIPAFFAKSSSVYNPMIYIC). At Lys296 the chain carries N6-(retinylidene)lysine. The Cytoplasmic portion of the chain corresponds to 309–354 (MNKQFRHCMITTLCCGKNPFEEEEGASTTASKTEASSVSSSSVSPA). 2 S-palmitoyl cysteine lipidation sites follow: Cys322 and Cys323. Residues 333 to 354 (GASTTASKTEASSVSSSSVSPA) are disordered. Positions 334–354 (ASTTASKTEASSVSSSSVSPA) are enriched in low complexity.

It belongs to the G-protein coupled receptor 1 family. Opsin subfamily. Post-translationally, phosphorylated on some or all of the serine and threonine residues present in the C-terminal region. In terms of processing, contains one covalently linked retinal chromophore.

The protein resides in the membrane. It localises to the cell projection. Its subcellular location is the cilium. The protein localises to the photoreceptor outer segment. Functionally, photoreceptor required for image-forming vision at low light intensity. While most salt water fish species use retinal as chromophore, most freshwater fish use 3-dehydroretinal, or a mixture of retinal and 3-dehydroretinal. Light-induced isomerization of 11-cis to all-trans retinal triggers a conformational change that activates signaling via G-proteins. Subsequent receptor phosphorylation mediates displacement of the bound G-protein alpha subunit by arrestin and terminates signaling. This chain is Rhodopsin (rho), found in Salaria pavo (Peacock blenny).